Here is a 101-residue protein sequence, read N- to C-terminus: MILDSLLILAASVFCIGIYGLITSRNVVRILMSLELLLNAVNINFVAFSNFIDSIEIKGQVISIFIMTIAAAEAAVGLALILAIYRNRDTVDIESFNLLKR.

Transmembrane regions (helical) follow at residues 2–22, 32–52, and 64–84; these read ILDS…YGLI, MSLE…SNFI, and IFIM…ILAI.

The protein belongs to the complex I subunit 4L family. In terms of assembly, NDH is composed of at least 16 different subunits, 5 of which are encoded in the nucleus.

It localises to the plastid. The protein resides in the chloroplast thylakoid membrane. The enzyme catalyses a plastoquinone + NADH + (n+1) H(+)(in) = a plastoquinol + NAD(+) + n H(+)(out). It carries out the reaction a plastoquinone + NADPH + (n+1) H(+)(in) = a plastoquinol + NADP(+) + n H(+)(out). In terms of biological role, NDH shuttles electrons from NAD(P)H:plastoquinone, via FMN and iron-sulfur (Fe-S) centers, to quinones in the photosynthetic chain and possibly in a chloroplast respiratory chain. The immediate electron acceptor for the enzyme in this species is believed to be plastoquinone. Couples the redox reaction to proton translocation, and thus conserves the redox energy in a proton gradient. The protein is NAD(P)H-quinone oxidoreductase subunit 4L, chloroplastic of Chlorokybus atmophyticus (Soil alga).